The chain runs to 495 residues: Ectonucleoside triphosphate diphosphohydrolase 2 (495 aa).

Over 2 to 4 (ARR) the chain is Cytoplasmic. The helical transmembrane segment at 5–25 (AAAVLLLLALGCLLGILLLCL) threads the bilayer. The Extracellular segment spans residues 26-465 (GSGDARGPPS…SHRSMLYNYW (440 aa)). N-linked (GlcNAc...) asparagine glycosylation is present at Asn62. A disulfide bridge connects residues Cys73 and Cys97. Glu162 functions as the Proton acceptor in the catalytic mechanism. 201-205 (GASTQ) serves as a coordination point for ATP. Intrachain disulfides connect Cys239/Cys286, Cys267/Cys311, Cys324/Cys329, and Cys378/Cys400. The N-linked (GlcNAc...) asparagine glycan is linked to Asn297. Asn418 and Asn444 each carry an N-linked (GlcNAc...) asparagine glycan. The chain crosses the membrane as a helical span at residues 466–486 (VILILLFVITTLTALLTAVYL). Over 487–495 (LRRSKSSTI) the chain is Cytoplasmic.

It belongs to the GDA1/CD39 NTPase family. It depends on Ca(2+) as a cofactor. Requires Mg(2+) as cofactor.

It is found in the membrane. Its function is as follows. In the nervous system, could hydrolyze ATP and other nucleotides to regulate purinergic neurotransmission. Hydrolyzes ADP only to a marginal extent. The chain is Ectonucleoside triphosphate diphosphohydrolase 2 (ENTPD2) from Gallus gallus (Chicken).